Reading from the N-terminus, the 381-residue chain is Queuine tRNA-ribosyltransferase (381 aa).

Asp-92 acts as the Proton acceptor in catalysis. Residues 92–96, Asp-146, Gln-190, and Gly-217 each bind substrate; that span reads DSGGF. The segment at 248-254 is RNA binding; that stretch reads GVGRPED. Asp-267 functions as the Nucleophile in the catalytic mechanism. The tract at residues 272–276 is RNA binding; important for wobble base 34 recognition; that stretch reads TRNAR. Zn(2+) is bound by residues Cys-305, Cys-307, Cys-310, and His-337.

Belongs to the queuine tRNA-ribosyltransferase family. In terms of assembly, homodimer. Within each dimer, one monomer is responsible for RNA recognition and catalysis, while the other monomer binds to the replacement base PreQ1. Requires Zn(2+) as cofactor.

It catalyses the reaction 7-aminomethyl-7-carbaguanine + guanosine(34) in tRNA = 7-aminomethyl-7-carbaguanosine(34) in tRNA + guanine. The protein operates within tRNA modification; tRNA-queuosine biosynthesis. Functionally, catalyzes the base-exchange of a guanine (G) residue with the queuine precursor 7-aminomethyl-7-deazaguanine (PreQ1) at position 34 (anticodon wobble position) in tRNAs with GU(N) anticodons (tRNA-Asp, -Asn, -His and -Tyr). Catalysis occurs through a double-displacement mechanism. The nucleophile active site attacks the C1' of nucleotide 34 to detach the guanine base from the RNA, forming a covalent enzyme-RNA intermediate. The proton acceptor active site deprotonates the incoming PreQ1, allowing a nucleophilic attack on the C1' of the ribose to form the product. After dissociation, two additional enzymatic reactions on the tRNA convert PreQ1 to queuine (Q), resulting in the hypermodified nucleoside queuosine (7-(((4,5-cis-dihydroxy-2-cyclopenten-1-yl)amino)methyl)-7-deazaguanosine). The polypeptide is Queuine tRNA-ribosyltransferase (Xanthomonas oryzae pv. oryzae (strain MAFF 311018)).